A 132-amino-acid chain; its full sequence is MRMLLCLNVLTLSCVWAIAMEIPMSTVVKETLIQLSTHRALLTSNETMRLPVPTHKNHQLCIGEIFQGLDILKNQTVRGGTVEILFQNLSLIKKYIDGQKEKCGEERRKTRHFLDYLQEFLGVMSTEWAMEV.

A signal peptide spans 1–19; that stretch reads MRMLLCLNVLTLSCVWAIA. 3 N-linked (GlcNAc...) asparagine glycosylation sites follow: asparagine 45, asparagine 74, and asparagine 88.

This sequence belongs to the IL-5 family. Homodimer; disulfide-linked. Interacts with IL5RA. Interacts with CSF2RB.

The protein resides in the secreted. Homodimeric cytokine expressed predominantly by T-lymphocytes and NK cells that plays an important role in the survival, differentiation, and chemotaxis of eosinophils. Acts also on activated and resting B-cells to induce immunoglobulin production, growth, and differentiation. Mechanistically, exerts its biological effects through a receptor composed of IL5RA subunit and the cytokine receptor common subunit beta/CSF2RB. Binding to the receptor leads to activation of various kinases including LYN, SYK and JAK2 and thereby propagates signals through the RAS-MAPK and JAK-STAT5 pathways respectively. This Rattus norvegicus (Rat) protein is Interleukin-5 (Il5).